The chain runs to 241 residues: 2,3,4,5-tetrahydropyridine-2,6-dicarboxylate N-acetyltransferase (241 aa).

It belongs to the transferase hexapeptide repeat family. DapH subfamily.

It carries out the reaction (S)-2,3,4,5-tetrahydrodipicolinate + acetyl-CoA + H2O = L-2-acetamido-6-oxoheptanedioate + CoA. The protein operates within amino-acid biosynthesis; L-lysine biosynthesis via DAP pathway; LL-2,6-diaminopimelate from (S)-tetrahydrodipicolinate (acetylase route): step 1/3. Catalyzes the transfer of an acetyl group from acetyl-CoA to tetrahydrodipicolinate. The sequence is that of 2,3,4,5-tetrahydropyridine-2,6-dicarboxylate N-acetyltransferase from Thermoanaerobacter sp. (strain X514).